Reading from the N-terminus, the 356-residue chain is Histidinol-phosphate aminotransferase (356 aa).

Lysine 214 carries the N6-(pyridoxal phosphate)lysine modification.

Belongs to the class-II pyridoxal-phosphate-dependent aminotransferase family. Histidinol-phosphate aminotransferase subfamily. Homodimer. Pyridoxal 5'-phosphate is required as a cofactor.

The catalysed reaction is L-histidinol phosphate + 2-oxoglutarate = 3-(imidazol-4-yl)-2-oxopropyl phosphate + L-glutamate. Its pathway is amino-acid biosynthesis; L-histidine biosynthesis; L-histidine from 5-phospho-alpha-D-ribose 1-diphosphate: step 7/9. In Escherichia coli O1:K1 / APEC, this protein is Histidinol-phosphate aminotransferase.